Reading from the N-terminus, the 241-residue chain is Pyridoxal phosphate phosphatase PHOSPHO2 (241 aa).

Catalysis depends on Asp-8, which acts as the Nucleophile. Mg(2+)-binding residues include Asp-8 and Asp-10. The Proton donor role is filled by Asp-10. Substrate-binding residues include Asp-19 and Asp-99. Asp-179 is a Mg(2+) binding site.

It belongs to the HAD-like hydrolase superfamily. PHOSPHO family. The cofactor is Mg(2+).

It carries out the reaction pyridoxal 5'-phosphate + H2O = pyridoxal + phosphate. Its function is as follows. Phosphatase that has high activity toward pyridoxal 5'-phosphate (PLP). Also active at much lower level toward pyrophosphate, phosphoethanolamine (PEA), phosphocholine (PCho), phospho-l-tyrosine, fructose-6-phosphate, p-nitrophenyl phosphate, and h-glycerophosphate. The sequence is that of Pyridoxal phosphate phosphatase PHOSPHO2 (Phospho2) from Rattus norvegicus (Rat).